A 463-amino-acid chain; its full sequence is uncharacterized protein (463 aa).

A PE domain is found at 1 to 93 (MSYMIAVPDM…AGAYASAEAT (93 aa)). Disordered stretches follow at residues 231–320 (GGAG…AGNG) and 408–463 (NGGD…TPGQ). Positions 408-451 (NGGDGGKGGDAQLIGNGGNGGNGGKGGTGLMPGINGTGGAGGSR) are enriched in gly residues.

This sequence belongs to the mycobacterial PE family. PGRS subfamily.

This is an uncharacterized protein from Mycobacterium tuberculosis (strain ATCC 25618 / H37Rv).